We begin with the raw amino-acid sequence, 313 residues long: Ribosomal RNA small subunit methyltransferase H (313 aa).

S-adenosyl-L-methionine is bound by residues 35–37, Asp55, Phe79, Asp101, and Gln108; that span reads GGH.

It belongs to the methyltransferase superfamily. RsmH family.

The protein resides in the cytoplasm. It catalyses the reaction cytidine(1402) in 16S rRNA + S-adenosyl-L-methionine = N(4)-methylcytidine(1402) in 16S rRNA + S-adenosyl-L-homocysteine + H(+). Functionally, specifically methylates the N4 position of cytidine in position 1402 (C1402) of 16S rRNA. This is Ribosomal RNA small subunit methyltransferase H from Shigella dysenteriae serotype 1 (strain Sd197).